The sequence spans 199 residues: FMN-dependent NADH:quinone oxidoreductase 2 (199 aa).

Residues Ser-10, 16–18, and 96–99 contribute to the FMN site; these read SVS and MYNF.

It belongs to the azoreductase type 1 family. In terms of assembly, homodimer. Requires FMN as cofactor.

It catalyses the reaction 2 a quinone + NADH + H(+) = 2 a 1,4-benzosemiquinone + NAD(+). It carries out the reaction N,N-dimethyl-1,4-phenylenediamine + anthranilate + 2 NAD(+) = 2-(4-dimethylaminophenyl)diazenylbenzoate + 2 NADH + 2 H(+). Quinone reductase that provides resistance to thiol-specific stress caused by electrophilic quinones. In terms of biological role, also exhibits azoreductase activity. Catalyzes the reductive cleavage of the azo bond in aromatic azo compounds to the corresponding amines. This chain is FMN-dependent NADH:quinone oxidoreductase 2, found in Pseudomonas fluorescens (strain ATCC BAA-477 / NRRL B-23932 / Pf-5).